The following is a 259-amino-acid chain: 7-cyano-7-deazaguanine synthase (259 aa).

An ATP-binding site is contributed by 32 to 42 (LSGGLDSVTCL). Cys-223, Cys-233, Cys-236, and Cys-239 together coordinate Zn(2+).

The protein belongs to the QueC family. The cofactor is Zn(2+).

It carries out the reaction 7-carboxy-7-deazaguanine + NH4(+) + ATP = 7-cyano-7-deazaguanine + ADP + phosphate + H2O + H(+). It functions in the pathway purine metabolism; 7-cyano-7-deazaguanine biosynthesis. Its function is as follows. Catalyzes the ATP-dependent conversion of 7-carboxy-7-deazaguanine (CDG) to 7-cyano-7-deazaguanine (preQ(0)). This Psychrobacter arcticus (strain DSM 17307 / VKM B-2377 / 273-4) protein is 7-cyano-7-deazaguanine synthase.